The chain runs to 528 residues: uncharacterized protein (528 aa).

Basic residues-rich tracts occupy residues 1 to 16 (MGKA…KNHL) and 25 to 43 (QLAR…SHTK). Residues 1-59 (MGKASKATKKFTKNHLKNTIERRKQLARSKKVYGTKNRNSHTKNKLESGTNDNNKNKED) are disordered.

Belongs to the NOC2 family.

The protein resides in the nucleus. The protein localises to the nucleolus. This is an uncharacterized protein from Schizosaccharomyces pombe (strain 972 / ATCC 24843) (Fission yeast).